We begin with the raw amino-acid sequence, 118 residues long: Large ribosomal subunit protein bL20 (118 aa).

The protein belongs to the bacterial ribosomal protein bL20 family.

Binds directly to 23S ribosomal RNA and is necessary for the in vitro assembly process of the 50S ribosomal subunit. It is not involved in the protein synthesizing functions of that subunit. The sequence is that of Large ribosomal subunit protein bL20 from Synechococcus sp. (strain JA-2-3B'a(2-13)) (Cyanobacteria bacterium Yellowstone B-Prime).